We begin with the raw amino-acid sequence, 329 residues long: MEAPPPSSDPYKFLNITLNSDGSLTRHRDFPKLPPTEQSKDIPLNQTNNTFIRIFKPRNIPPESKLPILVYFHGGGFILYSAASAPFHESCTKMADRLQTIILSVEYRLAPEHRLPAAYEDAVEAILWLRDQARGPINGGDCDTWLKDGVDFSKCYVMGSSSGGNIVYNVALRVVDTDLSPVKIQGLIMNQAFFGGVEPSDSESRLKDDKICPLPATHLLWSLCLPDGVDRDHVYSNPIKSSGPQEKDKMGRFPSTLINGYGGDPLVDRQRHVAEMLKGRGVHVETRFDKDGFHACELFDGNKAKALYETVEAFMKSCSSTGPSSNSNM.

An Involved in the stabilization of the negatively charged intermediate by the formation of the oxyanion hole motif is present at residues 73-75; it reads HGG. Active-site residues include serine 161, aspartate 264, and histidine 294.

The protein belongs to the 'GDXG' lipolytic enzyme family. As to expression, expressed in leaves, stems, flowers and siliques.

It catalyses the reaction a carboxylic ester + H2O = an alcohol + a carboxylate + H(+). Functionally, carboxylesterase acting on esters with varying acyl chain length. In Arabidopsis thaliana (Mouse-ear cress), this protein is Probable carboxylesterase 8 (CXE8).